The sequence spans 79 residues: Secretory calcium-binding phosphoprotein proline-glutamine rich 1 (79 aa).

A signal peptide spans 1–15 (MKFLILAGLLSTATA).

The protein localises to the secreted. In terms of biological role, tooth-associated epithelia protein that may participate in structuring the basal lamina at cell-tooth interface. In Homo sapiens (Human), this protein is Secretory calcium-binding phosphoprotein proline-glutamine rich 1.